Consider the following 278-residue polypeptide: Elongation factor Ts (278 aa).

The involved in Mg(2+) ion dislocation from EF-Tu stretch occupies residues 79 to 82; the sequence is TDFV.

It belongs to the EF-Ts family.

Its subcellular location is the cytoplasm. Associates with the EF-Tu.GDP complex and induces the exchange of GDP to GTP. It remains bound to the aminoacyl-tRNA.EF-Tu.GTP complex up to the GTP hydrolysis stage on the ribosome. The polypeptide is Elongation factor Ts (Borrelia duttonii (strain Ly)).